Here is a 951-residue protein sequence, read N- to C-terminus: MSKKRVHELGKQLKEQGIELSNQELVEKLHALGYLEVKSHSSSLEDDQAHAAYEKILAERKPKPAPVRPSGPGFVVRKRAHVEPPTVTAPAAPPPAEPEYAEPQYAEPQQAEQAYEPEPQEAQPEAAPEPVAAPEQPAEAAPLAAQAAPSPGAEAAAPAAPQAQPAQPAAPVAPPAPSAQPSAPQPPAAQPRPPQPPMPSRPPPAGYRPAPPPGARPPMSAAPGAPAQPGAAGQPPRPPVDPRTLRPTSTQAVVISRPLVPVRRVTPPTSARQQFPVAPGPRALGEVRELKVVPGSLGREREFIDVSRDKRRGRQPGRPISEEQAKSLSGKELLQAAISDRAYIPIRGKKKKPTKKGAKTQITEKAEHKKVIRIEESISVSELSQVMGVKASDLIRKLMQMGKMVTINAQIDADTAAILALEHGYTVEKKGFEVEEFIPEVEVDESKLVIRPPVVTVMGHVDHGKTSLLDAIRQADVAAGEAGGITQHIGAYSVNTPQGPITFLDTPGHEAFTAMRQRGAQVTDLVVLVVAADDGVMPQTVESIKAAKAAGVTILVAINKVDKPQAAPERVMQQLTEYELVAEQWGGTTIMLPVSARTKQGIPELLEYIALQSEVLELKANPDKLAAGRVIEAKLEKGRGPVATVLVEEGTLRVGDALVTGVHFGRVRAMMNERGEQVDNVGPGYPVEVLGLSGVPVAGDEFDVVEDEKAAKEVAQHRATKQRQKELGGVKKATLEDLFAKAKTSGQKVLNLVVKADVQGSSEAVSQALEKAATKKVGVKILESAVGAITKSDVLTAAAGNAVIVGFNTKPESEIENIASQQGVKILMFGIIYEAVDRIREEMAGLLEPIIKEKPLGKAEVRQVFNIPRVGQIAGSAVTEGVVKRAGHVRVVRDRKVIFTGKIGSLKRVKDDVREVAQGFECGIGVDGFSDVKQGDILEVYELEEIRPSLD.

Disordered stretches follow at residues 58–255 (AERK…AVVI) and 305–329 (DVSRDKRRGRQPGRPISEEQAKSLS). The span at 101–170 (AEPQYAEPQQ…PQAQPAQPAA (70 aa)) shows a compositional bias: low complexity. Residues 171-216 (PVAPPAPSAQPSAPQPPAAQPRPPQPPMPSRPPPAGYRPAPPPGAR) show a composition bias toward pro residues. Positions 217-234 (PPMSAAPGAPAQPGAAGQ) are enriched in low complexity. Residues 450 to 619 (IRPPVVTVMG…ALQSEVLELK (170 aa)) form the tr-type G domain. A G1 region spans residues 459-466 (GHVDHGKT). A GTP-binding site is contributed by 459–466 (GHVDHGKT). The tract at residues 484-488 (GITQH) is G2. Residues 505-508 (DTPG) form a G3 region. GTP is bound by residues 505 to 509 (DTPGH) and 559 to 562 (NKVD). The tract at residues 559–562 (NKVD) is G4. The interval 595–597 (SAR) is G5.

The protein belongs to the TRAFAC class translation factor GTPase superfamily. Classic translation factor GTPase family. IF-2 subfamily.

Its subcellular location is the cytoplasm. Functionally, one of the essential components for the initiation of protein synthesis. Protects formylmethionyl-tRNA from spontaneous hydrolysis and promotes its binding to the 30S ribosomal subunits. Also involved in the hydrolysis of GTP during the formation of the 70S ribosomal complex. The sequence is that of Translation initiation factor IF-2 from Anaeromyxobacter dehalogenans (strain 2CP-1 / ATCC BAA-258).